A 494-amino-acid chain; its full sequence is Cytochrome P450 2G1 (494 aa).

Cys439 contributes to the heme binding site.

The protein belongs to the cytochrome P450 family. Heme is required as a cofactor. In terms of tissue distribution, olfactory epithelium.

The protein resides in the endoplasmic reticulum membrane. The protein localises to the microsome membrane. It carries out the reaction an organic molecule + reduced [NADPH--hemoprotein reductase] + O2 = an alcohol + oxidized [NADPH--hemoprotein reductase] + H2O + H(+). Its function is as follows. Cytochromes P450 are a group of heme-thiolate monooxygenases. This isozyme seems to be implicated in olfaction. In Rattus norvegicus (Rat), this protein is Cytochrome P450 2G1 (Cyp2g1).